The following is a 334-amino-acid chain: Protein U17/U16 (334 aa).

This sequence belongs to the herpesviridae US22 family.

Functionally, isoform 3 can transactivate the human immunodeficiency virus type 1 promoter. This is Protein U17/U16 (U17/U16) from Human herpesvirus 6A (strain Uganda-1102) (HHV-6 variant A).